The sequence spans 609 residues: NADH-ubiquinone oxidoreductase chain 5 (609 aa).

16 helical membrane passes run 3–23, 41–61, 90–110, 115–135, 140–160, 174–194, 214–236, 244–264, 276–296, 304–323, 328–350, 368–388, 410–432, 460–480, 491–511, and 585–605; these read VINL…LPIV, TAIS…IYSG, MIFV…SMWY, PFIN…MILV, LFQL…LIGW, AVLY…WFLI, VPLM…HPWL, TPVS…FLLI, MQTT…ICAL, IIAF…IGIN, AFLH…GSII, VLPF…GMPF, WALL…IMFF, LLLG…PTST, LMAL…NLTS, and GLIK…LMMI.

The protein belongs to the complex I subunit 5 family. As to quaternary structure, core subunit of respiratory chain NADH dehydrogenase (Complex I) which is composed of 45 different subunits.

It localises to the mitochondrion inner membrane. It carries out the reaction a ubiquinone + NADH + 5 H(+)(in) = a ubiquinol + NAD(+) + 4 H(+)(out). Core subunit of the mitochondrial membrane respiratory chain NADH dehydrogenase (Complex I) which catalyzes electron transfer from NADH through the respiratory chain, using ubiquinone as an electron acceptor. Essential for the catalytic activity and assembly of complex I. This chain is NADH-ubiquinone oxidoreductase chain 5 (MT-ND5), found in Halichoerus grypus (Gray seal).